We begin with the raw amino-acid sequence, 274 residues long: Penicillin-insensitive murein endopeptidase (274 aa).

An N-terminal signal peptide occupies residues M1–A19. 3 cysteine pairs are disulfide-bonded: C44–C265, C187–C235, and C216–C223. Zn(2+)-binding residues include H110, H113, D120, D147, H150, and H211. The segment at D225–L274 is disordered.

It belongs to the peptidase M74 family. As to quaternary structure, dimer. Zn(2+) serves as cofactor.

The protein localises to the periplasm. Functionally, murein endopeptidase that cleaves the D-alanyl-meso-2,6-diamino-pimelyl amide bond that connects peptidoglycan strands. Likely plays a role in the removal of murein from the sacculus. In Salmonella paratyphi B (strain ATCC BAA-1250 / SPB7), this protein is Penicillin-insensitive murein endopeptidase.